The primary structure comprises 472 residues: Methanethiol oxidase (472 aa).

Alanine 2 bears the N-acetylalanine mark. Serine 111 and serine 467 each carry phosphoserine.

This sequence belongs to the selenium-binding protein family. As to quaternary structure, interacts with USP33. Post-translationally, the N-terminus is blocked. As to expression, present in liver and colon (at protein level).

The protein resides in the nucleus. Its subcellular location is the cytoplasm. It localises to the cytosol. The protein localises to the membrane. It carries out the reaction methanethiol + O2 + H2O = hydrogen sulfide + formaldehyde + H2O2 + H(+). Its pathway is organosulfur degradation. Functionally, catalyzes the oxidation of methanethiol, an organosulfur compound known to be produced in substantial amounts by gut bacteria. Selenium-binding protein which may be involved in the sensing of reactive xenobiotics in the cytoplasm. May be involved in intra-Golgi protein transport. The chain is Methanethiol oxidase (Selenbp1) from Rattus norvegicus (Rat).